A 133-amino-acid polypeptide reads, in one-letter code: Small ribosomal subunit protein uS19 (133 aa).

It belongs to the universal ribosomal protein uS19 family.

Functionally, protein S19 forms a complex with S13 that binds strongly to the 16S ribosomal RNA. The chain is Small ribosomal subunit protein uS19 from Thermococcus gammatolerans (strain DSM 15229 / JCM 11827 / EJ3).